The primary structure comprises 65 residues: Small ribosomal subunit protein bS21A (65 aa).

Belongs to the bacterial ribosomal protein bS21 family.

This chain is Small ribosomal subunit protein bS21A, found in Francisella tularensis subsp. holarctica (strain LVS).